A 310-amino-acid chain; its full sequence is MIIVTGGAGFIGSNIVKSLNDKGITDILVVDNLKDGTKFVNLVDLNIADYMDKEDFLIQIMAGEEFGDIEAVFHEGACSSTTEWDGKYMMDNNYQYSKELLHYCLERDIPFLYASSAATYGGRTSDFIESREYEKPLNVYGYSKFLFDEYVRQILPEASSQIVGFRYFNVYGPREGHKGSMASVAFHLNTQLNNGETPKLFEGSENFKRDFVYVGDVADVNLWFWENGVSGIFNLGTGRAESFQAVADAALAYHKKSDLEYIPFPEKLKGRYQAFTQADLTNLRAAGYDKPFKTVAEGVTEYMAWLNRDA.

NADP(+)-binding positions include 10-11 (FI), 31-32 (DN), Lys38, Lys53, 75-79 (EGACS), and Asn92. Residue Tyr140 is the Proton acceptor of the active site. Lys144 contributes to the NADP(+) binding site. Asn169 lines the substrate pocket. Residues Val170 and Lys178 each coordinate NADP(+). Residue Lys178 is the Proton acceptor of the active site. Residues Ser180, His187, 201–204 (FEGS), Arg209, and Tyr272 each bind substrate.

Belongs to the NAD(P)-dependent epimerase/dehydratase family. HldD subfamily. Homopentamer. NADP(+) is required as a cofactor.

The enzyme catalyses ADP-D-glycero-beta-D-manno-heptose = ADP-L-glycero-beta-D-manno-heptose. The protein operates within nucleotide-sugar biosynthesis; ADP-L-glycero-beta-D-manno-heptose biosynthesis; ADP-L-glycero-beta-D-manno-heptose from D-glycero-beta-D-manno-heptose 7-phosphate: step 4/4. Catalyzes the interconversion between ADP-D-glycero-beta-D-manno-heptose and ADP-L-glycero-beta-D-manno-heptose via an epimerization at carbon 6 of the heptose. The polypeptide is ADP-L-glycero-D-manno-heptose-6-epimerase (Citrobacter koseri (strain ATCC BAA-895 / CDC 4225-83 / SGSC4696)).